A 347-amino-acid polypeptide reads, in one-letter code: GMP reductase (347 aa).

108–131 (ADFEKTKQILDLNPALNFVCIDVA) serves as a coordination point for NADP(+). Positions 181 and 183 each coordinate K(+). Catalysis depends on C186, which acts as the Thioimidate intermediate. 216-239 (IVSDGGCTTPGDVAKAFGGGADFV) serves as a coordination point for NADP(+).

It belongs to the IMPDH/GMPR family. GuaC type 1 subfamily. As to quaternary structure, homotetramer.

It catalyses the reaction IMP + NH4(+) + NADP(+) = GMP + NADPH + 2 H(+). Catalyzes the irreversible NADPH-dependent deamination of GMP to IMP. It functions in the conversion of nucleobase, nucleoside and nucleotide derivatives of G to A nucleotides, and in maintaining the intracellular balance of A and G nucleotides. The protein is GMP reductase of Shigella flexneri serotype 5b (strain 8401).